Consider the following 877-residue polypeptide: Lipophilic envelope-spanning tunnel protein B (877 aa).

Residues 1 to 19 (MSQETPASTTEAQIKNKRR) are Cytoplasmic-facing. The helical transmembrane segment at 20-40 (ISPFWLLPFIALMIASWLIWD) threads the bilayer. At 41–877 (SYQDRGNTVT…WREWGTALPK (837 aa)) the chain is on the periplasmic side. MCE/MlaD regions lie at residues 46–149 (GNTV…VALD), 160–272 (DLMI…GLYE), 279–382 (RGVI…VVPG), 391–499 (DVLT…PLYA), 515–625 (TTVS…ILYA), 634–737 (GGQI…LQEA), and 746–862 (DGLS…LLQE).

Belongs to the PqiB family. Homohexamer. May interact with LetA in the inner membrane. May also interact with partners in the outer membrane.

It localises to the cell inner membrane. Its function is as follows. Forms a tunnel that spans the entire periplasmic space. Is probably involved in the transport of lipids between the inner membrane and the outer membrane through the tunnel. Forms a dynamic tunnel sufficiently long to mediate lipid transport directly between the two membranes without the need for a shuttle protein. Binds phospholipids. Lipids bind inside the tunnel. Required for outer membrane homeostasis. Contributes to membrane integrity. In Escherichia coli (strain K12), this protein is Lipophilic envelope-spanning tunnel protein B.